An 85-amino-acid polypeptide reads, in one-letter code: Antitoxin VapB4 (85 aa).

Belongs to the phD/YefM antitoxin family. Interacts with cognate toxin VapC4.

Functionally, antitoxin component of a type II toxin-antitoxin (TA) system. Antitoxin that counteracts the effect of the VapC4 toxin. The polypeptide is Antitoxin VapB4 (vapB4) (Mycobacterium tuberculosis (strain CDC 1551 / Oshkosh)).